We begin with the raw amino-acid sequence, 407 residues long: 1-deoxy-D-xylulose 5-phosphate reductoisomerase (407 aa).

Positions 25, 26, 27, 28, 53, and 136 each coordinate NADPH. Lys137 contributes to the 1-deoxy-D-xylulose 5-phosphate binding site. Glu138 contributes to the NADPH binding site. Asp162 is a binding site for Mn(2+). 1-deoxy-D-xylulose 5-phosphate is bound by residues Ser163, Glu164, Ser188, and His211. Glu164 contacts Mn(2+). Residue Gly217 participates in NADPH binding. 1-deoxy-D-xylulose 5-phosphate-binding residues include Ser224, Asn229, Lys230, and Glu233. Residue Glu233 participates in Mn(2+) binding.

This sequence belongs to the DXR family. Mg(2+) serves as cofactor. Requires Mn(2+) as cofactor.

The enzyme catalyses 2-C-methyl-D-erythritol 4-phosphate + NADP(+) = 1-deoxy-D-xylulose 5-phosphate + NADPH + H(+). The protein operates within isoprenoid biosynthesis; isopentenyl diphosphate biosynthesis via DXP pathway; isopentenyl diphosphate from 1-deoxy-D-xylulose 5-phosphate: step 1/6. Functionally, catalyzes the NADPH-dependent rearrangement and reduction of 1-deoxy-D-xylulose-5-phosphate (DXP) to 2-C-methyl-D-erythritol 4-phosphate (MEP). The polypeptide is 1-deoxy-D-xylulose 5-phosphate reductoisomerase (Rhodopseudomonas palustris (strain TIE-1)).